The sequence spans 347 residues: Eukaryotic translation initiation factor 3 subunit H (347 aa).

Residues 1–142 form the MPN domain; it reads MKIMKHCSQT…LRAFRLSPRF (142 aa).

The protein belongs to the eIF-3 subunit H family. As to quaternary structure, component of the eukaryotic translation initiation factor 3 (eIF-3) complex.

It localises to the cytoplasm. Its function is as follows. Component of the eukaryotic translation initiation factor 3 (eIF-3) complex, which is involved in protein synthesis of a specialized repertoire of mRNAs and, together with other initiation factors, stimulates binding of mRNA and methionyl-tRNAi to the 40S ribosome. The eIF-3 complex specifically targets and initiates translation of a subset of mRNAs involved in cell proliferation. The chain is Eukaryotic translation initiation factor 3 subunit H from Neosartorya fischeri (strain ATCC 1020 / DSM 3700 / CBS 544.65 / FGSC A1164 / JCM 1740 / NRRL 181 / WB 181) (Aspergillus fischerianus).